Reading from the N-terminus, the 465-residue chain is 3-isopropylmalate dehydratase large subunit (465 aa).

Positions 347, 407, and 410 each coordinate [4Fe-4S] cluster. A disordered region spans residues 416 to 443 (DTLRPGERSASTSNRNFEGRQGPGGRTH).

This sequence belongs to the aconitase/IPM isomerase family. LeuC type 1 subfamily. In terms of assembly, heterodimer of LeuC and LeuD. The cofactor is [4Fe-4S] cluster.

It catalyses the reaction (2R,3S)-3-isopropylmalate = (2S)-2-isopropylmalate. Its pathway is amino-acid biosynthesis; L-leucine biosynthesis; L-leucine from 3-methyl-2-oxobutanoate: step 2/4. Functionally, catalyzes the isomerization between 2-isopropylmalate and 3-isopropylmalate, via the formation of 2-isopropylmaleate. This chain is 3-isopropylmalate dehydratase large subunit, found in Frankia casuarinae (strain DSM 45818 / CECT 9043 / HFP020203 / CcI3).